Consider the following 171-residue polypeptide: Large ribosomal subunit protein bL9 (171 aa).

This sequence belongs to the bacterial ribosomal protein bL9 family.

Binds to the 23S rRNA. This Rickettsia prowazekii (strain Madrid E) protein is Large ribosomal subunit protein bL9.